A 20-amino-acid chain; its full sequence is Short cationic peptide-4c (20 aa).

Glu-20 is subject to Glutamic acid 1-amide.

In terms of tissue distribution, expressed by the venom gland.

It localises to the secreted. This Cupiennius salei (American wandering spider) protein is Short cationic peptide-4c.